The primary structure comprises 128 residues: Ribosome-binding factor A (128 aa).

It belongs to the RbfA family. As to quaternary structure, monomer. Binds 30S ribosomal subunits, but not 50S ribosomal subunits or 70S ribosomes.

The protein resides in the cytoplasm. Its function is as follows. One of several proteins that assist in the late maturation steps of the functional core of the 30S ribosomal subunit. Associates with free 30S ribosomal subunits (but not with 30S subunits that are part of 70S ribosomes or polysomes). Required for efficient processing of 16S rRNA. May interact with the 5'-terminal helix region of 16S rRNA. The chain is Ribosome-binding factor A from Herminiimonas arsenicoxydans.